Reading from the N-terminus, the 83-residue chain is Small ribosomal subunit protein uS17 (83 aa).

The protein belongs to the universal ribosomal protein uS17 family. Part of the 30S ribosomal subunit.

In terms of biological role, one of the primary rRNA binding proteins, it binds specifically to the 5'-end of 16S ribosomal RNA. This is Small ribosomal subunit protein uS17 from Colwellia psychrerythraea (strain 34H / ATCC BAA-681) (Vibrio psychroerythus).